Consider the following 1192-residue polypeptide: Pyruvate carboxylase (1192 aa).

The disordered stretch occupies residues 1 to 23 (MAAPRQPEEAVDDTEFIDDHHDQ). Residues 40 to 492 (QFQKILVANR…WTTFIDDTPE (453 aa)) form the Biotin carboxylation domain. Residues K158, E242, and H277 each contribute to the ATP site. The ATP-grasp domain maps to 162–359 (RQLAIRCDVP…IVAAQIQIAA (198 aa)). R334 is a catalytic residue. The Pyruvate carboxyltransferase domain maps to 578-846 (CLIMDTTWRD…DPGLNSAQVR (269 aa)). Residues 586–590 (RDAHQ) and R659 each bind substrate. D587 serves as a coordination point for a divalent metal cation. A divalent metal cation contacts are provided by K755, H785, and H787. The residue at position 755 (K755) is an N6-carboxylysine. A substrate-binding site is contributed by T920. In terms of domain architecture, Biotinyl-binding spans 1115 to 1190 (KAELGDSSQV…DGQDLVCKIV (76 aa)). The residue at position 1156 (K1156) is an N6-biotinyllysine.

The cofactor is biotin. Zn(2+) serves as cofactor.

Its subcellular location is the cytoplasm. It catalyses the reaction hydrogencarbonate + pyruvate + ATP = oxaloacetate + ADP + phosphate + H(+). It participates in carbohydrate biosynthesis; gluconeogenesis. Its function is as follows. Pyruvate carboxylase catalyzes a 2-step reaction, involving the ATP-dependent carboxylation of the covalently attached biotin in the first step and the transfer of the carboxyl group to pyruvate in the second. The polypeptide is Pyruvate carboxylase (pyc) (Aspergillus niger).